We begin with the raw amino-acid sequence, 165 residues long: Large ribosomal subunit protein uL10 (165 aa).

The protein belongs to the universal ribosomal protein uL10 family. Part of the ribosomal stalk of the 50S ribosomal subunit. The N-terminus interacts with L11 and the large rRNA to form the base of the stalk. The C-terminus forms an elongated spine to which L12 dimers bind in a sequential fashion forming a multimeric L10(L12)X complex.

Its function is as follows. Forms part of the ribosomal stalk, playing a central role in the interaction of the ribosome with GTP-bound translation factors. This chain is Large ribosomal subunit protein uL10, found in Burkholderia thailandensis (strain ATCC 700388 / DSM 13276 / CCUG 48851 / CIP 106301 / E264).